The primary structure comprises 87 residues: Lipid-anchored plasma membrane protein uvi15 (87 aa).

The tract at residues 1–64 (MSAQQFYGDK…MYVQQPQASD (64 aa)) is disordered. Low complexity predominate over residues 18–41 (QQAYGGPNYYPPQQNYPQQGYAPP).

This sequence belongs to the CYSTM1 family. Post-translationally, palmitoylated.

The protein resides in the cell membrane. It localises to the cell tip. In terms of biological role, required for the maintenance of viability of cells in stationary phase and in starvation conditions. The protein is Lipid-anchored plasma membrane protein uvi15 (uvi15) of Schizosaccharomyces pombe (strain 972 / ATCC 24843) (Fission yeast).